The sequence spans 215 residues: Protein C' (215 aa).

Residues 12 to 34 (MPSFLKKILKLRGRRQEDESRSR) form a disordered region. The involved in self-degradation and in host STAT1 degradation stretch occupies residues 15 to 22 (FLKKILKL).

The protein belongs to the respirovirus protein C family. The different isoforms interact (via C-terminus) with unphosphorylated and phosphorylated human STAT1 (via N-terminus), favoring the formation of parallel STAT1 homodimers. The different isoforms do not interact with host STAT2. C protein interacts with L protein; this interaction has an inhibitory effect on viral transcription and replication. In terms of processing, Y1 and Y2 proteins are produced not only by alternative initiation, but also by proteolytic cleavage of C'. Only alternative initiation is detected in vitro, whereas in vivo cleavage seems to be predominant.

Its subcellular location is the host cytoplasm. In terms of biological role, the different products prevent the establishment of cellular antiviral state by blocking the interferon-alpha/beta (IFN-alpha/beta) and IFN-gamma signaling pathways. They inhibit IFN-alpha/beta induced tyrosine phosphorylation of STAT1 and STAT2. Blocking the IFN-alpha/beta pathway requires binding to STAT1 in the cytoplasm. They inhibit IFN-gamma induced serine phosphorylation of STAT1. Block the IFN-gamma pathway by binding to and stabilizing the parallel form of the STAT1 dimer, further inducing high-molecular-weight complex formation and inhibition of transcription by IFN-gamma. May also have a role in preventing the cell to enter apoptosis. Modulate regulation of viral transcription and replication. Overexpression inhibits the viral RNA polymerase. The absence of all C', C, Y1 and Y2 proteins leads to viral delayed growth. Plays an important role in virion particles release. Modulates virion shape. In Sendai virus (strain Nagoya) (SeV), this protein is Protein C' (P/V/C).